Consider the following 449-residue polypeptide: Glycine receptor subunit alpha-2 (449 aa).

An N-terminal signal peptide occupies residues M1–G27. Topologically, residues K28 to Y255 are extracellular. N70 carries an N-linked (GlcNAc...) asparagine glycan. Positions 97 and 161 each coordinate glycine. R97 is a strychnine binding site. C170 and C184 are joined by a disulfide. Zn(2+) contacts are provided by E224 and D226. A disulfide bond links C230 and C241. Residue T236 participates in glycine binding. H247 lines the Zn(2+) pocket. The helical transmembrane segment at L256 to I276 threads the bilayer. Over N277–P282 the chain is Cytoplasmic. A helical transmembrane segment spans residues A283–S302. At R303–K313 the chain is on the extracellular side. Residues A314–A334 traverse the membrane as a helical segment. Residues G335–R420 lie on the Cytoplasmic side of the membrane. The helical transmembrane segment at A421 to I441 threads the bilayer. At R442–D449 the chain is on the extracellular side.

The protein belongs to the ligand-gated ion channel (TC 1.A.9) family.

It is found in the postsynaptic cell membrane. It localises to the synapse. The protein resides in the cell membrane. The protein localises to the cell projection. The enzyme catalyses chloride(in) = chloride(out). Its activity is regulated as follows. Channel opening is triggered by extracellular glycine. Channel opening is also triggered by taurine and beta-alanine. Inhibited by strychnine. Its function is as follows. Subunit of heteromeric glycine-gated chloride channels. Plays a role in synaptic plasticity. Contributes to the generation of inhibitory postsynaptic currents, and is involved in the down-regulation of neuronal excitability. This chain is Glycine receptor subunit alpha-2 (glra2), found in Danio rerio (Zebrafish).